The chain runs to 270 residues: NAD kinase (270 aa).

Asp63 (proton acceptor) is an active-site residue. NAD(+)-binding positions include 63–64 (DG), Arg68, 131–132 (NE), Lys142, Arg159, Asp161, 172–177 (TAYAMS), Ala196, and Gln230.

Belongs to the NAD kinase family. Requires a divalent metal cation as cofactor.

The protein localises to the cytoplasm. It carries out the reaction NAD(+) + ATP = ADP + NADP(+) + H(+). Functionally, involved in the regulation of the intracellular balance of NAD and NADP, and is a key enzyme in the biosynthesis of NADP. Catalyzes specifically the phosphorylation on 2'-hydroxyl of the adenosine moiety of NAD to yield NADP. This chain is NAD kinase, found in Methanoregula boonei (strain DSM 21154 / JCM 14090 / 6A8).